We begin with the raw amino-acid sequence, 691 residues long: Threonine--tRNA ligase (691 aa).

Residues 1–66 form the TGS domain; the sequence is MSAPARPAPA…DADVDVIPVT (66 aa). Positions 265-571 are catalytic; sequence DHRKLGVELD…LTEHYAGAFP (307 aa). 3 residues coordinate Zn(2+): cysteine 370, histidine 421, and histidine 548.

The protein belongs to the class-II aminoacyl-tRNA synthetase family. Homodimer. Zn(2+) is required as a cofactor.

The protein resides in the cytoplasm. It carries out the reaction tRNA(Thr) + L-threonine + ATP = L-threonyl-tRNA(Thr) + AMP + diphosphate + H(+). Its function is as follows. Catalyzes the attachment of threonine to tRNA(Thr) in a two-step reaction: L-threonine is first activated by ATP to form Thr-AMP and then transferred to the acceptor end of tRNA(Thr). Also edits incorrectly charged L-seryl-tRNA(Thr). The protein is Threonine--tRNA ligase of Mycolicibacterium vanbaalenii (strain DSM 7251 / JCM 13017 / BCRC 16820 / KCTC 9966 / NRRL B-24157 / PYR-1) (Mycobacterium vanbaalenii).